We begin with the raw amino-acid sequence, 480 residues long: Probable GH family 25 lysozyme 3 (480 aa).

Positions 1-20 (MNKLILSILSVLLIVSIASA) are cleaved as a signal peptide. The Ch-type lysozyme domain maps to 21–231 (GNGIDISSGT…STTSSSATSS (211 aa)). Active-site residues include D25, D114, and E116. The span at 219–472 (SGSSTTSSSA…SSGSGNYTSG (254 aa)) shows a compositional bias: low complexity. The interval 219–480 (SGSSTTSSSA…SGSGNGAFLF (262 aa)) is disordered. Residues N423, N428, N437, N446, and N468 are each glycosylated (N-linked (GlcNAc...) asparagine).

Belongs to the glycosyl hydrolase 25 family.

It is found in the secreted. The catalysed reaction is Hydrolysis of (1-&gt;4)-beta-linkages between N-acetylmuramic acid and N-acetyl-D-glucosamine residues in a peptidoglycan and between N-acetyl-D-glucosamine residues in chitodextrins.. This is Probable GH family 25 lysozyme 3 from Dictyostelium discoideum (Social amoeba).